The primary structure comprises 479 residues: ATP synthase subunit beta (479 aa).

Position 168-175 (G168–T175) interacts with ATP.

The protein belongs to the ATPase alpha/beta chains family. As to quaternary structure, F-type ATPases have 2 components, CF(1) - the catalytic core - and CF(0) - the membrane proton channel. CF(1) has five subunits: alpha(3), beta(3), gamma(1), delta(1), epsilon(1). CF(0) has three main subunits: a(1), b(2) and c(9-12). The alpha and beta chains form an alternating ring which encloses part of the gamma chain. CF(1) is attached to CF(0) by a central stalk formed by the gamma and epsilon chains, while a peripheral stalk is formed by the delta and b chains.

The protein localises to the cell membrane. The enzyme catalyses ATP + H2O + 4 H(+)(in) = ADP + phosphate + 5 H(+)(out). Its function is as follows. Produces ATP from ADP in the presence of a proton gradient across the membrane. The catalytic sites are hosted primarily by the beta subunits. The polypeptide is ATP synthase subunit beta (Frankia alni (strain DSM 45986 / CECT 9034 / ACN14a)).